Reading from the N-terminus, the 436-residue chain is 3-ketoacyl-CoA thiolase (436 aa).

Cys99 acts as the Acyl-thioester intermediate in catalysis. Residues His392 and Cys422 each act as proton acceptor in the active site.

Belongs to the thiolase-like superfamily. Thiolase family. In terms of assembly, heterotetramer of two alpha chains (FadJ) and two beta chains (FadI).

It is found in the cytoplasm. The catalysed reaction is an acyl-CoA + acetyl-CoA = a 3-oxoacyl-CoA + CoA. Its pathway is lipid metabolism; fatty acid beta-oxidation. Catalyzes the final step of fatty acid oxidation in which acetyl-CoA is released and the CoA ester of a fatty acid two carbons shorter is formed. This chain is 3-ketoacyl-CoA thiolase, found in Pseudoalteromonas translucida (strain TAC 125).